A 67-amino-acid polypeptide reads, in one-letter code: Large ribosomal subunit protein uL29 (67 aa).

It belongs to the universal ribosomal protein uL29 family.

In Moorella thermoacetica (strain ATCC 39073 / JCM 9320), this protein is Large ribosomal subunit protein uL29.